Consider the following 260-residue polypeptide: Acetylglutamate kinase (260 aa).

Substrate contacts are provided by residues 46–47, arginine 68, and asparagine 160; that span reads GG.

This sequence belongs to the acetylglutamate kinase family. ArgB subfamily.

The protein resides in the cytoplasm. The enzyme catalyses N-acetyl-L-glutamate + ATP = N-acetyl-L-glutamyl 5-phosphate + ADP. Its pathway is amino-acid biosynthesis; L-arginine biosynthesis; N(2)-acetyl-L-ornithine from L-glutamate: step 2/4. Functionally, catalyzes the ATP-dependent phosphorylation of N-acetyl-L-glutamate. This Shewanella putrefaciens (strain CN-32 / ATCC BAA-453) protein is Acetylglutamate kinase.